A 261-amino-acid polypeptide reads, in one-letter code: Putative hydro-lyase Sfum_3393 (261 aa).

Belongs to the D-glutamate cyclase family.

This is Putative hydro-lyase Sfum_3393 from Syntrophobacter fumaroxidans (strain DSM 10017 / MPOB).